We begin with the raw amino-acid sequence, 420 residues long: Serine hydroxymethyltransferase (420 aa).

(6S)-5,6,7,8-tetrahydrofolate contacts are provided by residues leucine 121 and 125–127 (GHL). N6-(pyridoxal phosphate)lysine is present on lysine 230. Residues glutamate 246 and 354–356 (SPF) each bind (6S)-5,6,7,8-tetrahydrofolate.

It belongs to the SHMT family. In terms of assembly, homodimer. The cofactor is pyridoxal 5'-phosphate.

It is found in the cytoplasm. It carries out the reaction (6R)-5,10-methylene-5,6,7,8-tetrahydrofolate + glycine + H2O = (6S)-5,6,7,8-tetrahydrofolate + L-serine. It functions in the pathway one-carbon metabolism; tetrahydrofolate interconversion. It participates in amino-acid biosynthesis; glycine biosynthesis; glycine from L-serine: step 1/1. Catalyzes the reversible interconversion of serine and glycine with tetrahydrofolate (THF) serving as the one-carbon carrier. This reaction serves as the major source of one-carbon groups required for the biosynthesis of purines, thymidylate, methionine, and other important biomolecules. Also exhibits THF-independent aldolase activity toward beta-hydroxyamino acids, producing glycine and aldehydes, via a retro-aldol mechanism. This Rickettsia typhi (strain ATCC VR-144 / Wilmington) protein is Serine hydroxymethyltransferase.